The sequence spans 588 residues: Aspartate--tRNA ligase (588 aa).

Glu-177 is a binding site for L-aspartate. The interval 201 to 204 (QLFK) is aspartate. Arg-223 contributes to the L-aspartate binding site. ATP contacts are provided by residues 223-225 (RDE) and Gln-232. An L-aspartate-binding site is contributed by His-451. Glu-485 contributes to the ATP binding site. Residue Arg-492 coordinates L-aspartate. Residue 537 to 540 (GLDR) coordinates ATP.

The protein belongs to the class-II aminoacyl-tRNA synthetase family. Type 1 subfamily. Homodimer.

It localises to the cytoplasm. The enzyme catalyses tRNA(Asp) + L-aspartate + ATP = L-aspartyl-tRNA(Asp) + AMP + diphosphate. Catalyzes the attachment of L-aspartate to tRNA(Asp) in a two-step reaction: L-aspartate is first activated by ATP to form Asp-AMP and then transferred to the acceptor end of tRNA(Asp). The polypeptide is Aspartate--tRNA ligase (Staphylococcus epidermidis (strain ATCC 35984 / DSM 28319 / BCRC 17069 / CCUG 31568 / BM 3577 / RP62A)).